The sequence spans 563 residues: Group II intron-interrupted relaxase LtrB (563 aa).

Residue Y44 is part of the active site. Mg(2+) contacts are provided by H159 and H161.

This sequence belongs to the mobilization (MOB) protein type 1 family. The cofactor is Mg(2+). Mn(2+) serves as cofactor.

Functionally, mediates initiation of conjugal transfer possibly by introducing a single-stranded nick at the potential origin of transfer. The chain is Group II intron-interrupted relaxase LtrB (ltrBE1) from Lactococcus lactis subsp. cremoris (strain MG1363).